The chain runs to 196 residues: ATP-dependent Clp protease proteolytic subunit (196 aa).

Serine 101 serves as the catalytic Nucleophile. Residue histidine 126 is part of the active site.

This sequence belongs to the peptidase S14 family. Component of the chloroplastic Clp protease core complex.

Its subcellular location is the plastid. The protein localises to the chloroplast stroma. It catalyses the reaction Hydrolysis of proteins to small peptides in the presence of ATP and magnesium. alpha-casein is the usual test substrate. In the absence of ATP, only oligopeptides shorter than five residues are hydrolyzed (such as succinyl-Leu-Tyr-|-NHMec, and Leu-Tyr-Leu-|-Tyr-Trp, in which cleavage of the -Tyr-|-Leu- and -Tyr-|-Trp bonds also occurs).. Its function is as follows. Cleaves peptides in various proteins in a process that requires ATP hydrolysis. Has a chymotrypsin-like activity. Plays a major role in the degradation of misfolded proteins. In Morus indica (Mulberry), this protein is ATP-dependent Clp protease proteolytic subunit.